The chain runs to 491 residues: Sterol 14-alpha demethylase (491 aa).

The helical transmembrane segment at 20 to 40 threads the bilayer; that stretch reads LWMLSTVALLSILVVSVVINV. Cysteine 430 contacts heme.

It belongs to the cytochrome P450 family. Requires heme as cofactor.

The protein localises to the endoplasmic reticulum membrane. The catalysed reaction is a 14alpha-methyl steroid + 3 reduced [NADPH--hemoprotein reductase] + 3 O2 = a Delta(14) steroid + formate + 3 oxidized [NADPH--hemoprotein reductase] + 4 H2O + 4 H(+). It carries out the reaction a 14alpha-methyl steroid + reduced [NADPH--hemoprotein reductase] + O2 = a 14alpha-hydroxymethyl steroid + oxidized [NADPH--hemoprotein reductase] + H2O + H(+). The enzyme catalyses a 14alpha-hydroxymethyl steroid + reduced [NADPH--hemoprotein reductase] + O2 = a 14alpha-formyl steroid + oxidized [NADPH--hemoprotein reductase] + 2 H2O + H(+). It catalyses the reaction a 14alpha-formyl steroid + reduced [NADPH--hemoprotein reductase] + O2 = a Delta(14) steroid + formate + oxidized [NADPH--hemoprotein reductase] + H2O + 2 H(+). The catalysed reaction is lanosterol + 3 reduced [NADPH--hemoprotein reductase] + 3 O2 = 4,4-dimethyl-5alpha-cholesta-8,14,24-trien-3beta-ol + formate + 3 oxidized [NADPH--hemoprotein reductase] + 4 H2O + 4 H(+). It carries out the reaction lanosterol + reduced [NADPH--hemoprotein reductase] + O2 = 32-hydroxylanosterol + oxidized [NADPH--hemoprotein reductase] + H2O + H(+). The enzyme catalyses 32-hydroxylanosterol + reduced [NADPH--hemoprotein reductase] + O2 = 32-oxolanosterol + oxidized [NADPH--hemoprotein reductase] + 2 H2O + H(+). It catalyses the reaction 32-oxolanosterol + reduced [NADPH--hemoprotein reductase] + O2 = 4,4-dimethyl-5alpha-cholesta-8,14,24-trien-3beta-ol + formate + oxidized [NADPH--hemoprotein reductase] + H2O + 2 H(+). The catalysed reaction is eburicol + 3 reduced [NADPH--hemoprotein reductase] + 3 O2 = 14-demethyleburicol + formate + 3 oxidized [NADPH--hemoprotein reductase] + 4 H2O + 4 H(+). It carries out the reaction eburicol + reduced [NADPH--hemoprotein reductase] + O2 = 32-hydroxyeburicol + oxidized [NADPH--hemoprotein reductase] + H2O + H(+). The enzyme catalyses 32-hydroxyeburicol + reduced [NADPH--hemoprotein reductase] + O2 = 32-oxoeburicol + oxidized [NADPH--hemoprotein reductase] + 2 H2O + H(+). It catalyses the reaction 32-oxoeburicol + reduced [NADPH--hemoprotein reductase] + O2 = 14-demethyleburicol + formate + oxidized [NADPH--hemoprotein reductase] + H2O + 2 H(+). The protein operates within steroid biosynthesis; sterol biosynthesis. Functionally, sterol 14alpha-demethylase, encoded by cyp51A, cyp51B and cyp51C, that plays a critical role in the third module of ergosterol biosynthesis pathway, being ergosterol the major sterol component in fungal membranes that participates in a variety of functions. The third module or late pathway involves the ergosterol synthesis itself through consecutive reactions that mainly occur in the endoplasmic reticulum (ER) membrane. In filamentous fungi, during the initial step of this module, lanosterol (lanosta-8,24-dien-3beta-ol) can be metabolized to eburicol. Sterol 14alpha-demethylase catalyzes the three-step oxidative removal of the 14alpha-methyl group (C-32) of both these sterols in the form of formate, and converts eburicol and lanosterol to 14-demethyleburicol (4,4,24-trimethylergosta-8,14,24(28)-trienol) and 4,4-dimethyl-5alpha-cholesta-8,14,24-trien-3beta-ol, respectively, which are further metabolized by other enzymes in the pathway to ergosterol. Can also use substrates not intrinsic to fungi, such as 24,25-dihydrolanosterol (DHL), producing 4,4'-dimethyl-8,14-cholestadien-3-beta-ol, but at lower rates than the endogenous substrates. As a target of azole drugs, plays a crucial role in azole susceptibility. The chain is Sterol 14-alpha demethylase from Aspergillus flavus (strain ATCC 200026 / FGSC A1120 / IAM 13836 / NRRL 3357 / JCM 12722 / SRRC 167).